The primary structure comprises 361 residues: Peptidyl-prolyl cis-trans isomerase CYP40 (361 aa).

One can recognise a PPIase cyclophilin-type domain in the interval 7 to 172; sequence FMDISIGGEL…QDVVIHDCGE (166 aa). TPR repeat units lie at residues 212 to 245 and 298 to 331; these read VDFV…LDIC and VKAL…EPND.

This sequence belongs to the cyclophilin-type PPIase family. Expressed at low levels in seedlings, roots, shoots, leaves, stems, inflorescences, flowers and siliques, with highest levels dividing tissues.

It localises to the cytoplasm. It carries out the reaction [protein]-peptidylproline (omega=180) = [protein]-peptidylproline (omega=0). With respect to regulation, binds cyclosporin A (CsA). CsA mediates some of its effects via an inhibitory action on PPIase. In terms of biological role, PPIases accelerate the folding of proteins. It catalyzes the cis-trans isomerization of proline imidic peptide bonds in oligopeptides. Involved in promoting the expression of the juvenile phase of vegetative development, and, to a lower extent, in regulating the positioning of floral buds, floral morphogenesis and the expression of HSPs. Collaboratively with RBL and ULT1, influences floral meristem (FM) determinacy in an AGAMOUS and SUPERMAN-dependent manner, thus contributing to the floral developmental homeostasis. The sequence is that of Peptidyl-prolyl cis-trans isomerase CYP40 from Arabidopsis thaliana (Mouse-ear cress).